We begin with the raw amino-acid sequence, 1137 residues long: Phytochrome C (1137 aa).

The segment covering 1 to 18 has biased composition (low complexity); the sequence is MSSSRSNNRATCSRSSSA. The interval 1-27 is disordered; the sequence is MSSSRSNNRATCSRSSSARSKHSARVV. The region spanning 217–400 is the GAF domain; that stretch reads NLSLLCDVLV…VFGIQINKEV (184 aa). Cys322 contributes to the phytochromobilin binding site. 2 consecutive PAS domains span residues 620 to 690 and 750 to 824; these read VTNE…LQGI and IQGD…TKLS. One can recognise a Histidine kinase domain in the interval 904–1124; it reads YIRQELRNPL…IVLVEFPVAQ (221 aa).

Belongs to the phytochrome family. As to quaternary structure, homodimer. In terms of processing, contains one covalently linked phytochromobilin chromophore.

Regulatory photoreceptor which exists in two forms that are reversibly interconvertible by light: the Pr form that absorbs maximally in the red region of the spectrum and the Pfr form that absorbs maximally in the far-red region. Photoconversion of Pr to Pfr induces an array of morphogenic responses, whereas reconversion of Pfr to Pr cancels the induction of those responses. Pfr controls the expression of a number of nuclear genes including those encoding the small subunit of ribulose-bisphosphate carboxylase, chlorophyll A/B binding protein, protochlorophyllide reductase, rRNA, etc. It also controls the expression of its own gene(s) in a negative feedback fashion. The protein is Phytochrome C (PHYC) of Oryza sativa subsp. japonica (Rice).